We begin with the raw amino-acid sequence, 95 residues long: Acyl carrier protein (95 aa).

The Carrier domain maps to 4-79 (KEIFERIEQV…HVMELTLDLV (76 aa)). Ser39 bears the O-(pantetheine 4'-phosphoryl)serine mark.

This sequence belongs to the acyl carrier protein (ACP) family. Post-translationally, 4'-phosphopantetheine is transferred from CoA to a specific serine of apo-ACP by AcpS. This modification is essential for activity because fatty acids are bound in thioester linkage to the sulfhydryl of the prosthetic group.

The protein localises to the cytoplasm. It participates in lipid metabolism; fatty acid biosynthesis. Its function is as follows. Carrier of the growing fatty acid chain in fatty acid biosynthesis. The sequence is that of Acyl carrier protein from Saccharopolyspora erythraea (strain ATCC 11635 / DSM 40517 / JCM 4748 / NBRC 13426 / NCIMB 8594 / NRRL 2338).